The chain runs to 411 residues: MKMVLSQRQREELNQAIADYLGTNGYADSLEAFRKEADLSTEAEKKFGGLLEKKWTSVIRLQKKVMELEAKLTEAEKEVIEGAPTKNKRTPGEWIPRPPEKYSLTGHRASITRVIFHPIFGLMVSASEDATIKIWDFETGEYERTLKGHTDSVQDVAFDAQGKLLVSCSADLSIKLWDFQQSYECVKTMHGHDHNVSSVAFVPAGDYVLSASRDRTIKMWEVATGYCVKTYTGHREWVRMVRVHIEGSIFATCSNDHTIRVWLTNSKDCKVELRDHEHTVECIAWAPEAAASAINEAAGADNKKGHHQGPFLASGSRDKTIRIWDVSVGQCLLTLNGHDNWVRGLAFHPGGKYLVSASDDKTIRVWDLRNKRCMKTLYAHQHFCTSIDFHKAHPYVISGSVDQTVKVWECR.

Residues 9–41 (QREELNQAIADYLGTNGYADSLEAFRKEADLST) form the LisH domain. A coiled-coil region spans residues 56–83 (TSVIRLQKKVMELEAKLTEAEKEVIEGA). WD repeat units follow at residues 106–147 (GHRA…RTLK), 148–187 (GHTD…ECVK), 191–230 (GHDH…CVKT), 233–272 (GHRE…CKVE), 275–334 (DHEH…CLLT), 337–376 (GHDN…CMKT), and 379–411 (AHQH…WECR).

The protein belongs to the WD repeat LIS1/nudF family.

The protein resides in the cytoplasm. Its subcellular location is the cytoskeleton. It is found in the microtubule organizing center. The protein localises to the centrosome. In terms of biological role, positively regulates the activity of the minus-end directed microtubule motor protein dynein. May enhance dynein-mediated microtubule sliding by targeting dynein to the microtubule plus end. Required for several dynein- and microtubule-dependent processes. The polypeptide is Lissencephaly-1 homolog (Drosophila grimshawi (Hawaiian fruit fly)).